We begin with the raw amino-acid sequence, 209 residues long: Transmembrane 4 L6 family member 19 (209 aa).

The Cytoplasmic portion of the chain corresponds to 1 to 16 (MVSSPCTQASSRTCSR). The helical transmembrane segment at 17-37 (ILGLSLGTAALFAAGANVALL) threads the bilayer. At 38–59 (LPNWDVTYLLRGLLGRHAMLGT) the chain is on the extracellular side. Residues 60–80 (GLWGGGLMVLTAAILISLMGW) traverse the membrane as a helical segment. The Cytoplasmic segment spans residues 81–93 (RYGCFSKSGLCRS). The helical transmembrane segment at 94–114 (VLTALLSGGLALLGALICFVT) threads the bilayer. The Extracellular segment spans residues 115-175 (SGVALKDGPF…PSAAVVWHVS (61 aa)). Asparagine 133 carries N-linked (GlcNAc...) asparagine glycosylation. A helical transmembrane segment spans residues 176–196 (LFSALLCISLLQLLLVVVHVI). The tract at residues 186–196 (LQLLLVVVHVI) is important for homodimerization. The Cytoplasmic portion of the chain corresponds to 197-209 (NSLLGLFCSLCEK).

This sequence belongs to the L6 tetraspanin family. In terms of assembly, may form homodimers and homooligomers. Interacts with integrins ITGAV and ITGB3. Interacts with components of members of the V0 complex of vacuolar(H+)-ATPase (V-ATPase), including ATP6V0B and ATP6V0D2; this interaction inhibits V1-V0 complex assembly. As to expression, in adipose tissue, expressed by macrophages.

It localises to the lysosome membrane. The protein resides in the cytoplasm. It is found in the cytoskeleton. Its subcellular location is the cell projection. The protein localises to the filopodium. Its function is as follows. Negatively regulates vacuolar (H+)-ATPase (V-ATPase) activity by interacting with members of V-ATPase V0 complex and hence inhibiting V1-V0 complex assembly. Required for multinucleation during osteoclast differentiation. This Homo sapiens (Human) protein is Transmembrane 4 L6 family member 19 (TM4SF19).